A 160-amino-acid chain; its full sequence is SsrA-binding protein (160 aa).

This sequence belongs to the SmpB family.

It is found in the cytoplasm. Functionally, required for rescue of stalled ribosomes mediated by trans-translation. Binds to transfer-messenger RNA (tmRNA), required for stable association of tmRNA with ribosomes. tmRNA and SmpB together mimic tRNA shape, replacing the anticodon stem-loop with SmpB. tmRNA is encoded by the ssrA gene; the 2 termini fold to resemble tRNA(Ala) and it encodes a 'tag peptide', a short internal open reading frame. During trans-translation Ala-aminoacylated tmRNA acts like a tRNA, entering the A-site of stalled ribosomes, displacing the stalled mRNA. The ribosome then switches to translate the ORF on the tmRNA; the nascent peptide is terminated with the 'tag peptide' encoded by the tmRNA and targeted for degradation. The ribosome is freed to recommence translation, which seems to be the essential function of trans-translation. The sequence is that of SsrA-binding protein from Pectobacterium carotovorum subsp. carotovorum (strain PC1).